We begin with the raw amino-acid sequence, 676 residues long: Ribonuclease R (676 aa).

Positions 207–527 (RKDLRDLLCF…LIVHRLLFNP (321 aa)) constitute an RNB domain. In terms of domain architecture, S1 motif spans 566–651 (NKFLQEQPKT…LTQKIVWSIA (86 aa)). The tract at residues 656–676 (DKPKKIKKTPSKKKGTKKRAS) is disordered. Residues 659 to 676 (KKIKKTPSKKKGTKKRAS) are compositionally biased toward basic residues.

The protein belongs to the RNR ribonuclease family. RNase R subfamily.

It is found in the cytoplasm. The enzyme catalyses Exonucleolytic cleavage in the 3'- to 5'-direction to yield nucleoside 5'-phosphates.. In terms of biological role, 3'-5' exoribonuclease that releases 5'-nucleoside monophosphates and is involved in maturation of structured RNAs. This Chlamydia pneumoniae (Chlamydophila pneumoniae) protein is Ribonuclease R.